The primary structure comprises 595 residues: Beta-(1--&gt;2)glucan export ATP-binding/permease protein NdvA (595 aa).

The next 5 membrane-spanning stretches (helical) occupy residues 21–41 (FLLICTANITLAIITIAEPIL), 56–76 (LVTLAVWMCFGISNIIAYVLV), 129–149 (IWLEFMRQHLSTFVALFVLVP), 158–178 (LSIVLMVLAILYILIARLVMQ), and 252–272 (ISIVCVLLLGAFFVIKGQLSV). Positions 21–301 (FLLICTANIT…ISGFINLAVS (281 aa)) constitute an ABC transmembrane type-1 domain. Positions 335–569 (IQFHHVTYEF…DGHFYKLLKA (235 aa)) constitute an ABC transporter domain. 368 to 375 (GPTGAGKT) serves as a coordination point for ATP.

It belongs to the ABC transporter superfamily. Beta-(1--&gt;2)glucan exporter (TC 3.A.1.108.1) family. In terms of assembly, homodimer.

It localises to the cell inner membrane. It carries out the reaction [(1-&gt;2)-beta-D-glucosyl](n)(in) + ATP + H2O = [(1-&gt;2)-beta-D-glucosyl](n)(out) + ADP + phosphate + H(+). In terms of biological role, involved in beta-(1--&gt;2)glucan export. Transmembrane domains (TMD) form a pore in the inner membrane and the ATP-binding domain (NBD) is responsible for energy generation. The polypeptide is Beta-(1--&gt;2)glucan export ATP-binding/permease protein NdvA (Bartonella bacilliformis (strain ATCC 35685 / KC583 / Herrer 020/F12,63)).